The primary structure comprises 575 residues: Hemagglutinin-neuraminidase (575 aa).

Over residues 1 to 10 (MDGDRGKRDS) the composition is skewed to basic and acidic residues. Residues 1–24 (MDGDRGKRDSYWSTSPSGSTTKLA) form a disordered region. Residues 1–37 (MDGDRGKRDSYWSTSPSGSTTKLASGWERSSKVDTWL) lie on the Intravirion side of the membrane. The tract at residues 10–14 (SYWST) is incorporation in virion. The span at 11–23 (YWSTSPSGSTTKL) shows a compositional bias: polar residues. The helical transmembrane segment at 38 to 58 (LILSFTQWALSIATVIICIII) threads the bilayer. Residues 59–140 (SARQGYSMKE…RQELTQLCES (82 aa)) are involved in interaction with F protein. Residues 59 to 575 (SARQGYSMKE…SIPKLCKAES (517 aa)) lie on the Virion surface side of the membrane. N-linked (GlcNAc...) asparagine; by host glycosylation is present at Asn-77. 4 cysteine pairs are disulfide-bonded: Cys-192–Cys-216, Cys-258–Cys-271, Cys-357–Cys-469, and Cys-463–Cys-473. The segment at 254–259 (NRKSCS) is involved in neuraminidase activity. N-linked (GlcNAc...) asparagine; by host glycosylation is found at Asn-499 and Asn-511. Cysteines 535 and 544 form a disulfide.

The protein belongs to the paramyxoviruses hemagglutinin-neuraminidase family. As to quaternary structure, homotetramer; composed of disulfide-linked homodimers. Interacts with F protein trimer. In terms of processing, N-glycosylated; glycans consist of a mixture of high mannose-type oligosaccharides and of complex-type oligosaccharides.

The protein localises to the virion membrane. It is found in the host cell membrane. It catalyses the reaction Hydrolysis of alpha-(2-&gt;3)-, alpha-(2-&gt;6)-, alpha-(2-&gt;8)- glycosidic linkages of terminal sialic acid residues in oligosaccharides, glycoproteins, glycolipids, colominic acid and synthetic substrates.. Attaches the virus to sialic acid-containing cell receptors and thereby initiating infection. Binding of HN protein to the receptor induces a conformational change that allows the F protein to trigger virion/cell membranes fusion. Its function is as follows. Neuraminidase activity ensures the efficient spread of the virus by dissociating the mature virions from the neuraminic acid containing glycoproteins. In Sendai virus (strain Fushimi) (SeV), this protein is Hemagglutinin-neuraminidase (HN).